The sequence spans 517 residues: MLRFLAPRLLSLQGRTARYSSAAALPSPILNPDIPYNQLFINNEWQDAVSKKTFPTVNPTTGEVIGHVAEGDRADVDRAVKAAREAFRLGSPWRRMDASERGRLLNRLADLVERDRVYLASLETLDNGKPFQESYALDLDEVIKVYRYFAGWADKWHGKTIPMDGQHFCFTRHEPVGVCGQIIPWNFPLVMQGWKLAPALATGNTVVMKVAEQTPLSALYLASLIKEAGFPPGVVNIITGYGPTAGAAIAQHVDVDKVAFTGSTEVGHLIQKAAGDSNLKRVTLELGGKSPSIVLADADMEHAVEQCHEALFFNMGQCCCAGSRTFVEESIYNEFLERTVEKAKQRKVGNPFELDTQQGPQVDKEQFERVLGYIQLGQKEGAKLLCGGERFGERGFFIKPTVFGGVQDDMRIAKEEIFGPVQPLFKFKKIEEVVERANNTRYGLAAAVFTRDLDKAMYFTQALQAGTVWVNTYNIVTCHTPFGGFKESGNGRELGEDGLKAYTEVKTVTIKVPQKNS.

The transit peptide at 1–17 directs the protein to the mitochondrion; sequence MLRFLAPRLLSLQGRTA. N6-acetyllysine is present on Lys-51. Lys-52 carries the N6-acetyllysine; alternate modification. Residue Lys-52 is modified to N6-succinyllysine; alternate. An N6-succinyllysine modification is found at Lys-81. 262-267 is an NAD(+) binding site; that stretch reads GSTEVG. The active-site Proton acceptor is Glu-285. Cys-319 serves as the catalytic Nucleophile. N6-acetyllysine; alternate occurs at positions 364, 383, 399, 414, and 426. 5 positions are modified to N6-succinyllysine; alternate: Lys-364, Lys-383, Lys-399, Lys-414, and Lys-426. Lys-429 bears the N6-acetyllysine mark.

Belongs to the aldehyde dehydrogenase family. In terms of assembly, homotetramer. As to expression, liver, testis and to a lesser extent in brain.

It is found in the mitochondrion matrix. It catalyses the reaction an aldehyde + NAD(+) + H2O = a carboxylate + NADH + 2 H(+). Its pathway is alcohol metabolism; ethanol degradation; acetate from ethanol: step 2/2. ALDHs play a major role in the detoxification of alcohol-derived acetaldehyde. They are involved in the metabolism of corticosteroids, biogenic amines, neurotransmitters, and lipid peroxidation. The protein is Aldehyde dehydrogenase X, mitochondrial (ALDH1B1) of Homo sapiens (Human).